Here is a 243-residue protein sequence, read N- to C-terminus: 2-C-methyl-D-erythritol 4-phosphate cytidylyltransferase (243 aa).

This sequence belongs to the IspD/TarI cytidylyltransferase family. IspD subfamily. Homodimer.

It carries out the reaction 2-C-methyl-D-erythritol 4-phosphate + CTP + H(+) = 4-CDP-2-C-methyl-D-erythritol + diphosphate. It functions in the pathway isoprenoid biosynthesis; isopentenyl diphosphate biosynthesis via DXP pathway; isopentenyl diphosphate from 1-deoxy-D-xylulose 5-phosphate: step 2/6. Catalyzes the formation of 4-diphosphocytidyl-2-C-methyl-D-erythritol from CTP and 2-C-methyl-D-erythritol 4-phosphate (MEP). This Photorhabdus laumondii subsp. laumondii (strain DSM 15139 / CIP 105565 / TT01) (Photorhabdus luminescens subsp. laumondii) protein is 2-C-methyl-D-erythritol 4-phosphate cytidylyltransferase.